The chain runs to 518 residues: uncharacterized protein (518 aa).

ABC transporter domains are found at residues 4–260 (LSVK…QLEA) and 324–518 (LIFE…TKVL). Residues 36 to 43 (GANGEGKS) and 357 to 364 (GANGIGKT) each bind ATP.

The protein belongs to the ABC transporter superfamily.

This is an uncharacterized protein from Bacillus subtilis (strain 168).